A 432-amino-acid polypeptide reads, in one-letter code: D-amino acid dehydrogenase 1 (432 aa).

3-17 lines the FAD pocket; the sequence is VLILGSGVVGTVSAY.

The protein belongs to the DadA oxidoreductase family. It depends on FAD as a cofactor.

It catalyses the reaction a D-alpha-amino acid + A + H2O = a 2-oxocarboxylate + AH2 + NH4(+). Functionally, oxidative deamination of D-amino acids. In Pseudomonas putida (strain ATCC 47054 / DSM 6125 / CFBP 8728 / NCIMB 11950 / KT2440), this protein is D-amino acid dehydrogenase 1 (dadA1).